We begin with the raw amino-acid sequence, 2373 residues long: Highly reducing polyketide synthase (2373 aa).

Residues 19–446 (QEPIAVVGIA…GSNAHVIVEE (428 aa)) enclose the Ketosynthase family 3 (KS3) domain. Active-site for beta-ketoacyl synthase activity residues include Cys192, His329, and His369. Residues 560-874 (IFTGQGAQWP…QYTSAMARGA (315 aa)) are malonyl-CoA:ACP transacylase (MAT) domain. Catalysis depends on Ser652, which acts as the For malonyltransferase activity. An N-terminal hotdog fold region spans residues 942-1078 (HDLLGSKVLG…GLIRIDEDVP (137 aa)). The segment at 942–1241 (HDLLGSKVLG…LSGLRYTRID (300 aa)) is dehydratase (DH) domain. The PKS/mFAS DH domain maps to 942–1246 (HDLLGSKVLG…YTRIDTGPSV (305 aa)). His974 (proton acceptor; for dehydratase activity) is an active-site residue. Residues 1090–1246 (SHQVDASLWH…YTRIDTGPSV (157 aa)) are C-terminal hotdog fold. Asp1154 serves as the catalytic Proton donor; for dehydratase activity. Positions 1669-1985 (GTTDSLIYSE…SANHIGKIVI (317 aa)) are enoyl reductase (ER) domain. A ketoreductase (KR) domain region spans residues 2010-2187 (GYLLIGGLKG…NSVDLGAIQD (178 aa)). Residues 2294 to 2370 (AIHDAVIDVT…QLAQKIVARL (77 aa)) enclose the Carrier domain. Ser2330 carries the post-translational modification O-(pantetheine 4'-phosphoryl)serine.

Requires pantetheine 4'-phosphate as cofactor.

The protein operates within mycotoxin biosynthesis. Highly reducing polyketide synthase; part of the gene cluster that mediates the biosynthesis of brefeldin A (BFA), a protein transport inhibitor that shows antiviral, antifungal, and antitumor properties. The proposed biosynthesis of BFA involves formation of an acyclic polyketide chain that is differentially tailored throughout the backbone. The highly reducing polyketide synthase Bref-PKS is proposed to synthesize the precisely reduced octaketide precursor, which could then be directly offloaded by the thiohydrolase enzyme Bref-TH followed by a cytochrome P450 monooxygenase-mediated formation of the cyclopentane ring and macrocyclization to afford 7-deoxy BFA. Alternatively, the first ring annulation can also occur on the ACP-tethered intermediate before the thiohydrolase release and lactonization. The C7-hydroxylation by another cytochrome P450 monooxygenase is believed to be the final step in the process to obtain the final structure of BFA. In addition to the HRPKS Bref-PKS and the thiohydrolase Bref-TH, the brefeldin A biosynthesis cluster contains 4 cytochrome p450 monooxygenases (called orf3 to orf6), as well a the probable cluster-specific transcription regulator orf8. The chain is Highly reducing polyketide synthase from Eupenicillium brefeldianum (Penicillium brefeldianum).